The chain runs to 637 residues: Chaperone protein HtpG (637 aa).

Positions 1–334 are a; substrate-binding; sequence MQDVVNSEKL…SSDLPLNISR (334 aa). A b region spans residues 335–558; sequence ETLQNNKVIE…DGSMDIRMER (224 aa). Positions 559-637 are c; the sequence is FLREQKQLNY…MNNVLVKVYQ (79 aa).

Belongs to the heat shock protein 90 family. Homodimer.

Its subcellular location is the cytoplasm. In terms of biological role, molecular chaperone. Has ATPase activity. The chain is Chaperone protein HtpG from Ehrlichia canis (strain Jake).